A 640-amino-acid chain; its full sequence is Protein UL35 (640 aa).

Disordered stretches follow at residues 353–373 (ERGE…PREA), 500–571 (ASSS…PRQR), and 586–640 (AYSH…LRHL). Residues 358-367 (GDEDEEQEND) show a composition bias toward acidic residues. The segment covering 500-562 (ASSSSASSSS…LSGSHGISSA (63 aa)) has biased composition (low complexity). Over residues 588–598 (SHHRRHRRRRS) the composition is skewed to basic residues. Residues 631–640 (DDLAENLRHL) show a composition bias toward basic and acidic residues.

It belongs to the herpesviridae pp85 family. Interacts with UL82. Interacts with isoform UL35A. Interacts with host UBP7; this interaction significantly inhibits the ability of USP7 to form nuclear bodies. Interacts with host DCAF1 (via C-terminus). Interacts with host SNX5; this interaction allows proper gB localization during viral assembly. Interacts with host TBK1; this interaction prevents type I interferon production. As to quaternary structure, interacts with UL82. Interacts with isoform UL35. Interacts with host UBP7; this interaction significantly inhibits the ability of USP7 to form nuclear bodies. Interacts with host SNX5; this interaction allows proper gB localization during viral assembly.

It is found in the virion tegument. It localises to the host nucleus. The protein localises to the host cytoplasm. Functionally, plays important role in immediate-early gene expression through interaction with UL82. Forms nuclear bodies in host nucleus, independently of PML. In turn, UL35 nuclear bodies associate with and remodel PML bodies. Through interaction with host DCAF1, causes cells to accumulate in the G2 phase of the cell cycle by inducing a DNA damage response. Regulates viral assembly by controlling the localization of the essential gB through regulation of a retrograde transport pathway. This modulation occurs via binding and inhibition of host sorting nexin 5/SNX5. Also plays a role in the inhibition of pattern recognition receptor-mediated type I interferon signaling at the level of TBK1. In terms of biological role, promotes cytoplasmic UL82 accumulation and inhibits UL35-containing nuclear bodies formation. Regulates viral assembly by controlling the localization of the essential gB through regulation of a retrograde transport pathway. This modulation occurs via binding and inhibition of host sorting nexin 5/SNX5. The protein is Protein UL35 (UL35) of Homo sapiens (Human).